A 161-amino-acid chain; its full sequence is Endoribonuclease YbeY (161 aa).

The Zn(2+) site is built by His121, His125, and His131.

Belongs to the endoribonuclease YbeY family. Zn(2+) is required as a cofactor.

It localises to the cytoplasm. In terms of biological role, single strand-specific metallo-endoribonuclease involved in late-stage 70S ribosome quality control and in maturation of the 3' terminus of the 16S rRNA. This Stenotrophomonas maltophilia (strain K279a) protein is Endoribonuclease YbeY.